Here is a 471-residue protein sequence, read N- to C-terminus: Glutamate--tRNA ligase 2 (471 aa).

Positions 15–25 (PSPTGYLHIGG) match the 'HIGH' region motif. Residues 243–247 (KLSKR) carry the 'KMSKS' region motif. Lysine 246 provides a ligand contact to ATP.

It belongs to the class-I aminoacyl-tRNA synthetase family. Glutamate--tRNA ligase type 1 subfamily. Monomer.

Its subcellular location is the cytoplasm. It catalyses the reaction tRNA(Glu) + L-glutamate + ATP = L-glutamyl-tRNA(Glu) + AMP + diphosphate. Catalyzes the attachment of glutamate to tRNA(Glu) in a two-step reaction: glutamate is first activated by ATP to form Glu-AMP and then transferred to the acceptor end of tRNA(Glu). This Cereibacter sphaeroides (strain ATCC 17025 / ATH 2.4.3) (Rhodobacter sphaeroides) protein is Glutamate--tRNA ligase 2.